The chain runs to 111 residues: Large ribosomal subunit protein uL24 (111 aa).

The segment at 43–62 (TRHKKKDQTTKRAAKQSTGK) is disordered.

The protein belongs to the universal ribosomal protein uL24 family. Part of the 50S ribosomal subunit.

One of two assembly initiator proteins, it binds directly to the 5'-end of the 23S rRNA, where it nucleates assembly of the 50S subunit. In terms of biological role, one of the proteins that surrounds the polypeptide exit tunnel on the outside of the subunit. In Mycoplasma pneumoniae (strain ATCC 29342 / M129 / Subtype 1) (Mycoplasmoides pneumoniae), this protein is Large ribosomal subunit protein uL24.